The sequence spans 469 residues: Citrate synthase, mitochondrial (469 aa).

Residues 1 to 30 (MSFLTVSRLAPKLLNSKNATYFLVAARNAS) constitute a mitochondrion transit peptide. Residues His-304 and His-350 contribute to the active site. Arg-359 is a binding site for oxaloacetate. The active site involves Asp-405. Residues Arg-431 and Arg-451 each coordinate oxaloacetate.

This sequence belongs to the citrate synthase family. As to quaternary structure, homodimer.

The protein localises to the mitochondrion matrix. It catalyses the reaction oxaloacetate + acetyl-CoA + H2O = citrate + CoA + H(+). Its pathway is carbohydrate metabolism; tricarboxylic acid cycle; isocitrate from oxaloacetate: step 1/2. In terms of biological role, key enzyme of the Krebs tricarboxylic acid cycle which catalyzes the synthesis of citrate from acetyl coenzyme A and oxaloacetate. The polypeptide is Citrate synthase, mitochondrial (cs) (Xiphias gladius (Swordfish)).